The primary structure comprises 224 residues: Proteasome subunit beta (224 aa).

A propeptide spans 1–6 (MDVMKG) (removed in mature form; by autocatalysis). The active-site Nucleophile is Thr7.

The protein belongs to the peptidase T1B family. As to quaternary structure, the 20S proteasome core is composed of 14 alpha and 14 beta subunits that assemble into four stacked heptameric rings, resulting in a barrel-shaped structure. The two inner rings, each composed of seven catalytic beta subunits, are sandwiched by two outer rings, each composed of seven alpha subunits. The catalytic chamber with the active sites is on the inside of the barrel. Has a gated structure, the ends of the cylinder being occluded by the N-termini of the alpha-subunits. Is capped at one or both ends by the proteasome regulatory ATPase, PAN.

The protein resides in the cytoplasm. It catalyses the reaction Cleavage of peptide bonds with very broad specificity.. Its activity is regulated as follows. The formation of the proteasomal ATPase PAN-20S proteasome complex, via the docking of the C-termini of PAN into the intersubunit pockets in the alpha-rings, triggers opening of the gate for substrate entry. Interconversion between the open-gate and close-gate conformations leads to a dynamic regulation of the 20S proteasome proteolysis activity. Functionally, component of the proteasome core, a large protease complex with broad specificity involved in protein degradation. The protein is Proteasome subunit beta of Methanocaldococcus fervens (strain DSM 4213 / JCM 15782 / AG86) (Methanococcus fervens).